Here is a 463-residue protein sequence, read N- to C-terminus: Matrix remodeling-associated protein 8 (463 aa).

The signal sequence occupies residues 1-19; sequence MELRAWVLLWRLVLLQSSA. Residues 20-362 lie on the Extracellular side of the membrane; that stretch reads VLLSSGPSGP…PEGRAHFFQQ (343 aa). Ig-like V-type domains lie at 29–173 and 176–308; these read PATS…LEVT and PRAA…LRVT. 2 disulfides stabilise this stretch: cysteine 54-cysteine 153 and cysteine 202-cysteine 288. The N-linked (GlcNAc...) asparagine glycan is linked to asparagine 135. Serine 244 carries the phosphoserine modification. The RGD signature appears at 268 to 270; sequence RGD. The tract at residues 309–341 is disordered; the sequence is EPAARPPPPPRDSPGNGSSHSGAPGPGARDPTL. Low complexity predominate over residues 321–335; the sequence is SPGNGSSHSGAPGPG. Asparagine 324 carries an N-linked (GlcNAc...) asparagine glycan. A helical membrane pass occupies residues 363-383; the sequence is LGYVLATLLLFILLLITVVLA. The Cytoplasmic segment spans residues 384 to 463; sequence TRQRRRGGYE…DKEFRKEYCK (80 aa).

As to quaternary structure, homodimer in cis. Does not appear to form trans-homodimers. Interacts with ITGB3; the interaction inhibits ITGAV:ITGB3 heterodimer formation.

Its subcellular location is the cell membrane. It is found in the cell junction. It localises to the tight junction. The protein localises to the cytoplasm. The protein resides in the cell projection. Its subcellular location is the cilium membrane. It is found in the nucleus. Transmembrane protein which can modulate activity of various signaling pathways, probably via binding to integrin ITGAV:ITGB3. Mediates heterophilic cell-cell interactions in vitro. Inhibits osteoclastogenesis downstream of TNFSF11/RANKL and CSF1, where it may function by attenuating signaling via integrin ITGB3 and MAP kinase p38. Plays a role in cartilage formation where it promotes proliferation and maturation of growth plate chondrocytes. Stimulates formation of primary cilia in chondrocytes. Enhances expression of genes involved in the hedgehog signaling pathway in chondrocytes, including the hedgehog signaling molecule IHH; may also promote signaling via the PTHLH/PTHrP pathway. Plays a role in angiogenesis where it suppresses migration of endothelial cells and also promotes their apoptosis. Inhibits VEGF-induced activation of AKT and p38 MAP kinase in endothelial cells. Also inhibits VTN (vitronectin)-mediated integrin ITGAV:ITGB3 signaling and activation of PTK2/FAK. May play a role in the maturation and maintenance of the blood-brain barrier. This chain is Matrix remodeling-associated protein 8 (MXRA8), found in Bos taurus (Bovine).